A 129-amino-acid chain; its full sequence is uncharacterized protein (129 aa).

3 consecutive transmembrane segments (helical) span residues Leu49 to Val69, Phe72 to Phe92, and Tyr101 to Gln118.

It localises to the membrane. This is an uncharacterized protein from Saccharomyces cerevisiae (strain ATCC 204508 / S288c) (Baker's yeast).